We begin with the raw amino-acid sequence, 281 residues long: Homeobox protein Hox-A5 (281 aa).

2 disordered regions span residues 65 to 144 and 162 to 183; these read VGNE…PCSS and PLEE…SDST. Polar residues-rich tracts occupy residues 68-99 and 114-127; these read ERTQ…STGT and VASS…QSQH. A compositionally biased stretch (low complexity) spans 132-144; sequence NSITTPCSTPCSS. A compositionally biased stretch (polar residues) spans 172-183; it reads APTTPQNVSDST. Positions 187 to 192 match the Antp-type hexapeptide motif; sequence IYPWMR. The segment at residues 205–264 is a DNA-binding region (homeobox); it reads GKRARTAYTRYQTLELEKEFHFNRYLTRRRRIEIAHALCLSERQIKIWFQNRRMKWKKDN.

This sequence belongs to the Antp homeobox family.

The protein localises to the nucleus. Its function is as follows. Sequence-specific transcription factor which is part of a developmental regulatory system that provides cells with specific positional identities on the anterior-posterior axis. This is Homeobox protein Hox-A5 (hoxa5) from Morone saxatilis (Striped bass).